Consider the following 220-residue polypeptide: SAGA-associated factor 11 homolog (220 aa).

Positions 1–38 (MSTGTANSAVSSKSTNSTTSTSKVPVNEKSNNSQNANT) are disordered. The segment at 126–147 (CTCPNCDRPVSAARFAPHLEKC) adopts an SGF11-type zinc-finger fold. Composition is skewed to low complexity over residues 160 to 177 (RRLA…SSSS) and 204 to 220 (SQNS…GKTF). Residues 160-220 (RRLATKESNS…GSKKNNGKTF (61 aa)) are disordered.

Belongs to the SGF11 family. Component of some SAGA transcription coactivator-HAT complexes. Within the SAGA complex, participates in a subcomplex of SAGA called the DUB module (deubiquitination module).

The protein resides in the nucleus. In terms of biological role, component of the transcription regulatory histone acetylation (HAT) complex SAGA, a multiprotein complex that activates transcription by remodeling chromatin and mediating histone acetylation and deubiquitination. Within the SAGA complex, participates in a subcomplex that specifically deubiquitinates histone H2B. The SAGA complex is recruited to specific gene promoters by activators, where it is required for transcription. This Musca domestica (House fly) protein is SAGA-associated factor 11 homolog.